A 306-amino-acid polypeptide reads, in one-letter code: Polyisoprenyl-teichoic acid--peptidoglycan teichoic acid transferase TagU (306 aa).

The Cytoplasmic segment spans residues 1-11 (MRNERRKKKKT). Residues 12–32 (LLLTILTIIGLLVLGTGGYAY) traverse the membrane as a helical; Signal-anchor for type II membrane protein segment. Topologically, residues 33–306 (YLWHKAASTV…TKELKESLEK (274 aa)) are extracellular.

Belongs to the LytR/CpsA/Psr (LCP) family. In terms of assembly, interacts with MreB. Interacts with FloT.

It is found in the cell membrane. It localises to the membrane raft. The protein operates within cell wall biogenesis. Its function is as follows. May catalyze the final step in cell wall teichoic acid biosynthesis, the transfer of the anionic cell wall polymers (APs) from their lipid-linked precursor to the cell wall peptidoglycan (PG). This is Polyisoprenyl-teichoic acid--peptidoglycan teichoic acid transferase TagU from Bacillus subtilis (strain 168).